Here is a 60-residue protein sequence, read N- to C-terminus: MAVQQNKKSRSARDMRRSHDALEASTLSVEKSTGEVHLRHHVSPEGVYRGRKVIDKGADE.

The tract at residues 1 to 60 (MAVQQNKKSRSARDMRRSHDALEASTLSVEKSTGEVHLRHHVSPEGVYRGRKVIDKGADE) is disordered. A compositionally biased stretch (basic and acidic residues) spans 11–22 (SARDMRRSHDAL).

This sequence belongs to the bacterial ribosomal protein bL32 family.

The protein is Large ribosomal subunit protein bL32 of Ectopseudomonas mendocina (strain ymp) (Pseudomonas mendocina).